The sequence spans 210 residues: Tetraspanin-31 (210 aa).

At 1-12 the chain is on the cytoplasmic side; the sequence is MVCGGFACSKNA. The chain crosses the membrane as a helical span at residues 13-33; it reads LCALNVVYMLVSLLLIGVAAW. Residues 34–44 lie on the Extracellular side of the membrane; that stretch reads GKGLGLVSSIH. The helical transmembrane segment at 45-65 threads the bilayer; that stretch reads IIGGVIAVGVFLLLIAVAGLV. The Cytoplasmic segment spans residues 66–72; the sequence is GAVNHHQ. Residues 73–93 form a helical membrane-spanning segment; the sequence is VLLFFYMIILGLVFIFQFVIS. Over 94–173 the chain is Extracellular; it reads CSCLAINRSK…FLKHSDEALK (80 aa). N-linked (GlcNAc...) asparagine glycans are attached at residues Asn-100, Asn-109, Asn-117, and Asn-134. The helical transmembrane segment at 174-194 threads the bilayer; sequence ILGGVGLFFSFTEILGVWLAM. The Cytoplasmic segment spans residues 195–210; it reads RFRNQKDPRANPSAFL.

Belongs to the tetraspanin (TM4SF) family.

It localises to the membrane. This is Tetraspanin-31 (TSPAN31) from Homo sapiens (Human).